Here is a 25-residue protein sequence, read N- to C-terminus: Bioremediase (25 aa).

The region spanning 1–25 (DFPIANGERQSPVDIDTKAVVQDPA) is the Alpha-carbonic anhydrase domain. The segment at 1 to 25 (DFPIANGERQSPVDIDTKAVVQDPA) is disordered.

It belongs to the alpha-carbonic anhydrase family. Zn(2+) serves as cofactor.

Releases silica from silica-rich substances. This Thermoanaerobacter sp protein is Bioremediase.